Consider the following 333-residue polypeptide: UPF0324 membrane protein WS2204 (333 aa).

The next 9 membrane-spanning stretches (helical) occupy residues 4–26 (SIRPFVLGIALCTLIGIVAFGLA), 31–53 (FLSLHLSPLILSVLVGMALAPWY), 59–81 (IGIIGVLWCGKRLLRLGIVLFGF), 88–110 (LLGVGVEGFLIALLVVAGIFTLG), 125–147 (SMLIACGSAVCGAAAILALESLS), 154–176 (TAIAVGVVVLFGLLSMFLYPLVY), 218–240 (VIVKMIRVILLVPLLLLLSFTIL), 253–275 (PWFALLFLGAILLGSLFFFPSWL), and 310–332 (ALALGAILWGVLLFGGLGLVKLL).

Belongs to the UPF0324 family.

It localises to the cell membrane. The protein is UPF0324 membrane protein WS2204 of Wolinella succinogenes (strain ATCC 29543 / DSM 1740 / CCUG 13145 / JCM 31913 / LMG 7466 / NCTC 11488 / FDC 602W) (Vibrio succinogenes).